The chain runs to 201 residues: Probable GTP-binding protein EngB (201 aa).

Positions 21 to 191 constitute an EngB-type G domain; it reads AAPQIILAGR…WNLLDVTAIP (171 aa). Residues 29-36, 56-60, 75-78, 142-145, and 168-172 each bind GTP; these read GRSNVGKS, GKTRS, DLPG, TKSD, and ICVSS. 2 residues coordinate Mg(2+): S36 and T58.

This sequence belongs to the TRAFAC class TrmE-Era-EngA-EngB-Septin-like GTPase superfamily. EngB GTPase family. Mg(2+) serves as cofactor.

Its function is as follows. Necessary for normal cell division and for the maintenance of normal septation. This chain is Probable GTP-binding protein EngB, found in Maridesulfovibrio salexigens (strain ATCC 14822 / DSM 2638 / NCIMB 8403 / VKM B-1763) (Desulfovibrio salexigens).